Consider the following 972-residue polypeptide: Mast/stem cell growth factor receptor Kit (972 aa).

An N-terminal signal peptide occupies residues Met1–Ser25. The Extracellular segment spans residues Gln26–Pro520. Ig-like C2-type domains lie at Pro27–Arg112, Asp121–Arg205, Pro212–Val308, Pro317–Asn410, and Pro413–Ala507. Residues Cys58 and Cys97 are joined by a disulfide bond. Asn130 and Asn145 each carry an N-linked (GlcNAc...) asparagine glycan. Cystine bridges form between Cys136–Cys186, Cys151–Cys183, and Cys233–Cys290. 7 N-linked (GlcNAc...) asparagine glycosylation sites follow: Asn283, Asn300, Asn320, Asn352, Asn367, Asn463, and Asn486. A disulfide bridge connects residues Cys428 and Cys491. The helical transmembrane segment at Leu521–Tyr541 threads the bilayer. Residues Lys542–Val972 lie on the Cytoplasmic side of the membrane. Phosphotyrosine occurs at positions 543 and 549. A Mg(2+)-binding site is contributed by Tyr564. Phosphotyrosine; by autocatalysis occurs at positions 564 and 566. Residues Tyr564 to Tyr566 are important for interaction with phosphotyrosine-binding proteins. The Protein kinase domain occupies Leu585–Ser933. Residues Gly592–Val599, Lys619, and Glu667–Asp673 contribute to the ATP site. Tyr699 and Tyr717 each carry phosphotyrosine; by autocatalysis. Tyr726 is modified (phosphotyrosine). Ser737 and Ser742 each carry phosphoserine; by PKC/PRKCA. Asp788 functions as the Proton acceptor in the catalytic mechanism. ATP is bound at residue Arg792. Residues Asn793 and Asp806 each coordinate Mg(2+). Phosphoserine is present on Ser817. At Tyr819 the chain carries Phosphotyrosine; by autocatalysis. Ser887 bears the Phosphoserine mark. Residue Tyr896 is modified to Phosphotyrosine. Tyr932 is subject to Phosphotyrosine; by autocatalysis. At Ser955 the chain carries Phosphoserine.

It belongs to the protein kinase superfamily. Tyr protein kinase family. CSF-1/PDGF receptor subfamily. As to quaternary structure, monomer in the absence of bound KITLG/SCF. Homodimer in the presence of bound KITLG/SCF, forming a heterotetramer with two KITLG/SCF molecules. Interacts (via phosphorylated tyrosine residues) with the adapter proteins GRB2 and GRB7 (via SH2 domain), and SH2B2/APS. Interacts (via C-terminus) with MPDZ (via the tenth PDZ domain). Interacts (via phosphorylated tyrosine residues) with PIK3R1 and PIK3CD. Interacts (via phosphorylated tyrosine) with CRK (isoform Crk-II), FYN, SHC1 and MATK/CHK (via SH2 domain). Interacts with LYN and FES/FPS. Interacts (via phosphorylated tyrosine residues) with the protein phosphatases PTPN6/SHP-1 (via SH2 domain), PTPN11/SHP-2 (via SH2 domain) and PTPRU. Interacts with PLCG1. Interacts with DOK1 and TEC. Interacts with IL1RAP (independent of stimulation with KITLG/SCF). A mast cell-specific KITLG/SCF-induced interleukin-33 signaling complex contains IL1RL1, IL1RAP, KIT and MYD88. Ubiquitinated by SOCS6. KIT is rapidly ubiquitinated after autophosphorylation induced by KITLG/SCF binding, leading to internalization and degradation. Post-translationally, autophosphorylated on tyrosine residues. KITLG/SCF binding promotes autophosphorylation. Phosphorylated tyrosine residues are important for interaction with specific binding partners.

Its subcellular location is the cell membrane. The enzyme catalyses L-tyrosyl-[protein] + ATP = O-phospho-L-tyrosyl-[protein] + ADP + H(+). Present in an inactive conformation in the absence of bound ligand. KITLG/SCF binding leads to dimerization and activation by autophosphorylation on tyrosine residues. Activity is down-regulated by PRKCA-mediated phosphorylation on serine residues. Its function is as follows. Tyrosine-protein kinase that acts as a cell-surface receptor for the cytokine KITLG/SCF and plays an essential role in the regulation of cell survival and proliferation, hematopoiesis, stem cell maintenance, gametogenesis, mast cell development, migration and function, and in melanogenesis. In response to KITLG/SCF binding, KIT can activate several signaling pathways. Phosphorylates PIK3R1, PLCG1, SH2B2/APS and CBL. Activates the AKT1 signaling pathway by phosphorylation of PIK3R1, the regulatory subunit of phosphatidylinositol 3-kinase. Activated KIT also transmits signals via GRB2 and activation of RAS, RAF1 and the MAP kinases MAPK1/ERK2 and/or MAPK3/ERK1. Promotes activation of STAT family members STAT1, STAT3, STAT5A and STAT5B. Activation of PLCG1 leads to the production of the cellular signaling molecules diacylglycerol and inositol 1,4,5-trisphosphate. KIT signaling is modulated by protein phosphatases, and by rapid internalization and degradation of the receptor. Activated KIT promotes phosphorylation of the protein phosphatases PTPN6/SHP-1 and PTPRU, and of the transcription factors STAT1, STAT3, STAT5A and STAT5B. Promotes phosphorylation of PIK3R1, CBL, CRK (isoform Crk-II), LYN, MAPK1/ERK2 and/or MAPK3/ERK1, PLCG1, SRC and SHC1. The sequence is that of Mast/stem cell growth factor receptor Kit (KIT) from Callithrix jacchus (White-tufted-ear marmoset).